Consider the following 124-residue polypeptide: Large ribosomal subunit protein uL14 (124 aa).

Belongs to the universal ribosomal protein uL14 family. In terms of assembly, part of the 50S ribosomal subunit. Forms a cluster with proteins L3 and L19. In the 70S ribosome, L14 and L19 interact and together make contacts with the 16S rRNA in bridges B5 and B8.

Its function is as follows. Binds to 23S rRNA. Forms part of two intersubunit bridges in the 70S ribosome. This is Large ribosomal subunit protein uL14 from Mycoplasmoides gallisepticum (strain R(low / passage 15 / clone 2)) (Mycoplasma gallisepticum).